The following is a 342-amino-acid chain: Terpene cyclase resF (342 aa).

5 helical membrane-spanning segments follow: residues 5 to 25 (VSVV…GVFA), 81 to 101 (FMAQ…TEDF), 115 to 135 (WGVF…GVCF), 151 to 171 (STWI…MLIF), and 182 to 202 (IWGV…ASLL). Residue Asn-224 is glycosylated (N-linked (GlcNAc...) asparagine). 3 consecutive transmembrane segments (helical) span residues 229–249 (YVVA…FHLG), 269–289 (FLQI…WHEL), and 305–325 (YLLL…AWAL).

It belongs to the membrane-bound ascI terpene cyclase family.

It localises to the membrane. It participates in antifungal biosynthesis. Its function is as follows. Cyclase; part of the gene cluster that mediates the biosynthesis of the tetrahydropyranyl antifungal agent restricticin that acts as an inhibitor of CYP51 and blocks the ergosterol biosynthesis. The highly reducing polyketide synthase resH, the short chain dehydrogenase resG, the cyclase resF, the FAD-dependent monooxygenase resA and the enoylreductase resD are required to generate the first stable intermediate desmethylrestrictinol. ResH with resD biosynthesize the first polyketide chain intermediate that is reduced by resG, followed by epoxidation by resA before 6-endo cyclization via epoxide opening by resF leads to desmethylrestrictinol. The methyltransferase resE then catalyzes the C4 O-methylation of desmethylrestrictinol to produce restrictinol, and the nonribosomal peptide synthetase resC catalyzes the C3 esterification of restrictinol with glycine that leads to restricticin. In Aspergillus sclerotiorum, this protein is Terpene cyclase resF.